A 335-amino-acid polypeptide reads, in one-letter code: UPF0324 membrane protein LMOf2365_2179 (335 aa).

Transmembrane regions (helical) follow at residues T10 to L28, F33 to P55, A91 to L113, L123 to I142, V155 to I177, V251 to I270, F277 to L299, and P309 to F331.

Belongs to the UPF0324 family.

Its subcellular location is the cell membrane. This Listeria monocytogenes serotype 4b (strain F2365) protein is UPF0324 membrane protein LMOf2365_2179.